A 548-amino-acid polypeptide reads, in one-letter code: Peptide chain release factor 3 (548 aa).

In terms of domain architecture, tr-type G spans 23-290 (ERRRTFGIIS…ALLDWAPPPQ (268 aa)). GTP contacts are provided by residues 32–39 (SHPDAGKT), 100–104 (DTPGH), and 154–157 (NKMD).

The protein belongs to the TRAFAC class translation factor GTPase superfamily. Classic translation factor GTPase family. PrfC subfamily.

It localises to the cytoplasm. Functionally, increases the formation of ribosomal termination complexes and stimulates activities of RF-1 and RF-2. It binds guanine nucleotides and has strong preference for UGA stop codons. It may interact directly with the ribosome. The stimulation of RF-1 and RF-2 is significantly reduced by GTP and GDP, but not by GMP. The protein is Peptide chain release factor 3 of Aromatoleum aromaticum (strain DSM 19018 / LMG 30748 / EbN1) (Azoarcus sp. (strain EbN1)).